Consider the following 324-residue polypeptide: MEQTQKLKLNLQHFASNNVKPQVFNPDNVMMHEKKDGTLMNEFTTPILQEVMENSKIMQLGKYEPMEGTEKKFTFWADKPGAYWVGEGQKIETSKATWVNATMRAFKLGVILPVTKEFLNYTYSQFFEEMKPMIAEAFYKKFDEAGILNQGNNPFGKSIAQSIEKTNKVIKGDFTQDNIIDLEALLEDDELEANAFISKTQNRSLLRKIVDPETKERIYDRNSDSLDGLPVVNLKSSNLKRGELITGDFDKLIYGIPQLIEYKIDETAQLSTVKNEDGTPVNLFEQDMVALRATMHVALHIADDKAFAKLVPADKRTDSVPGEV.

The propeptide occupies 1–14 (MEQTQKLKLNLQHF).

This sequence belongs to the HK97 phage major capsid protein family. Forms homopentamers and homohexamers in the mature capsid forming a 63 nm icosahedral head with T=7 architecture. The procapsid is made up of hexamers and pentamers of this subunit. There are seven subunits in the asymmetric unit in the T=7 procapsid. Found in the procapsid with the scaffold protein in a 2:1 capsid protein:scaffold protein molecular ratio. Post-translationally, the N-terminus is cleaved by ribosomal processing protease Prp.

It localises to the virion. Its function is as follows. Assembles to form an icosahedral capsid, as well as procapsid, with T=7 icosahedral symmetry. This is Major capsid protein from Staphylococcus aureus.